We begin with the raw amino-acid sequence, 348 residues long: Neuronal growth regulator 1 (348 aa).

The first 31 residues, 1 to 31 (MVLLAQGACCSNQWLAAVLLSLCSCLPAGQS), serve as a signal peptide directing secretion. Ig-like C2-type domains lie at 32-128 (VDFP…VHLT), 133-215 (PKIY…RVIV), and 219-307 (PTIQ…LPLN). A disulfide bond links Cys54 and Cys112. N-linked (GlcNAc...) asparagine glycosylation is found at Asn67 and Asn149. Disulfide bonds link Cys154/Cys197 and Cys239/Cys291. Tyr181 is modified (phosphotyrosine). N-linked (GlcNAc...) asparagine glycosylation is found at Asn269, Asn280, Asn288, and Asn301. Gly318 carries the GPI-anchor amidated glycine lipid modification. A propeptide spans 319-348 (SACDLFSCWSLALTLSSVISIFYLKNAILQ) (removed in mature form).

Belongs to the immunoglobulin superfamily. IgLON family. In terms of tissue distribution, expressed in brain.

The protein localises to the cell membrane. In terms of biological role, may be involved in cell-adhesion. May function as a trans-neural growth-promoting factor in regenerative axon sprouting in the mammalian brain. The chain is Neuronal growth regulator 1 (Negr1) from Mus musculus (Mouse).